Here is a 147-residue protein sequence, read N- to C-terminus: Endoribonuclease YbeY (147 aa).

Zn(2+) contacts are provided by His107, His111, and His117.

It belongs to the endoribonuclease YbeY family. The cofactor is Zn(2+).

Its subcellular location is the cytoplasm. Its function is as follows. Single strand-specific metallo-endoribonuclease involved in late-stage 70S ribosome quality control and in maturation of the 3' terminus of the 16S rRNA. The polypeptide is Endoribonuclease YbeY (Solibacter usitatus (strain Ellin6076)).